We begin with the raw amino-acid sequence, 229 residues long: Ribonuclease T (229 aa).

The Exonuclease domain occupies 23–197 (VIIDVETAGF…YDTERTAELF (175 aa)). The Mg(2+) site is built by Asp26, Glu28, His184, and Asp189. Residue His184 is the Proton donor/acceptor of the active site.

It belongs to the RNase T family. Homodimer. The cofactor is Mg(2+).

Its function is as follows. Trims short 3' overhangs of a variety of RNA species, leaving a one or two nucleotide 3' overhang. Responsible for the end-turnover of tRNA: specifically removes the terminal AMP residue from uncharged tRNA (tRNA-C-C-A). Also appears to be involved in tRNA biosynthesis. This Haemophilus influenzae (strain PittEE) protein is Ribonuclease T.